The chain runs to 432 residues: 23S rRNA (uracil(1939)-C(5))-methyltransferase RlmD (432 aa).

In terms of domain architecture, TRAM spans 1–54 (MNPVVDILSLDHEGHGVARLDGKVTFVDGALAGERAEIAIFRKHAKYNSANAVA). Residues cysteine 67, cysteine 73, cysteine 76, and cysteine 155 each contribute to the [4Fe-4S] cluster site. Residues glutamine 264, phenylalanine 293, asparagine 298, glutamate 314, asparagine 341, and aspartate 362 each contribute to the S-adenosyl-L-methionine site. The active-site Nucleophile is the cysteine 389.

This sequence belongs to the class I-like SAM-binding methyltransferase superfamily. RNA M5U methyltransferase family. RlmD subfamily.

It catalyses the reaction uridine(1939) in 23S rRNA + S-adenosyl-L-methionine = 5-methyluridine(1939) in 23S rRNA + S-adenosyl-L-homocysteine + H(+). Catalyzes the formation of 5-methyl-uridine at position 1939 (m5U1939) in 23S rRNA. This chain is 23S rRNA (uracil(1939)-C(5))-methyltransferase RlmD, found in Thiobacillus denitrificans (strain ATCC 25259 / T1).